The sequence spans 331 residues: UPF0329 protein ECU01_0080/ECU01_1530/ECU02_1560/ECU04_0090/ECU08_0010/ECU08_2090 (331 aa).

Over residues 305–320 (QRSEMEKRDREQDPER) the composition is skewed to basic and acidic residues. Residues 305–331 (QRSEMEKRDREQDPERRRLRARRVGSL) form a disordered region. Basic residues predominate over residues 321-331 (RRLRARRVGSL).

This sequence belongs to the UPF0329 family.

In Encephalitozoon cuniculi (strain GB-M1) (Microsporidian parasite), this protein is UPF0329 protein ECU01_0080/ECU01_1530/ECU02_1560/ECU04_0090/ECU08_0010/ECU08_2090.